An 89-amino-acid polypeptide reads, in one-letter code: MAHKKAGGSSRNGRDSESKRLGVKKFGGEAVIAGNIIVRQRGTRWHPGDNVGIGKDHTLFALSKGMVSFQRKANNRSYVSVIPVVETVE.

The tract at residues 1-22 is disordered; it reads MAHKKAGGSSRNGRDSESKRLG.

The protein belongs to the bacterial ribosomal protein bL27 family.

The protein is Large ribosomal subunit protein bL27 of Bartonella henselae (strain ATCC 49882 / DSM 28221 / CCUG 30454 / Houston 1) (Rochalimaea henselae).